Reading from the N-terminus, the 111-residue chain is Large ribosomal subunit protein uL22 (111 aa).

Belongs to the universal ribosomal protein uL22 family. In terms of assembly, part of the 50S ribosomal subunit.

This protein binds specifically to 23S rRNA; its binding is stimulated by other ribosomal proteins, e.g. L4, L17, and L20. It is important during the early stages of 50S assembly. It makes multiple contacts with different domains of the 23S rRNA in the assembled 50S subunit and ribosome. In terms of biological role, the globular domain of the protein is located near the polypeptide exit tunnel on the outside of the subunit, while an extended beta-hairpin is found that lines the wall of the exit tunnel in the center of the 70S ribosome. This is Large ribosomal subunit protein uL22 from Xanthomonas euvesicatoria pv. vesicatoria (strain 85-10) (Xanthomonas campestris pv. vesicatoria).